The chain runs to 155 residues: SsrA-binding protein (155 aa).

This sequence belongs to the SmpB family.

It localises to the cytoplasm. Its function is as follows. Required for rescue of stalled ribosomes mediated by trans-translation. Binds to transfer-messenger RNA (tmRNA), required for stable association of tmRNA with ribosomes. tmRNA and SmpB together mimic tRNA shape, replacing the anticodon stem-loop with SmpB. tmRNA is encoded by the ssrA gene; the 2 termini fold to resemble tRNA(Ala) and it encodes a 'tag peptide', a short internal open reading frame. During trans-translation Ala-aminoacylated tmRNA acts like a tRNA, entering the A-site of stalled ribosomes, displacing the stalled mRNA. The ribosome then switches to translate the ORF on the tmRNA; the nascent peptide is terminated with the 'tag peptide' encoded by the tmRNA and targeted for degradation. The ribosome is freed to recommence translation, which seems to be the essential function of trans-translation. This chain is SsrA-binding protein, found in Bacillus mycoides (strain KBAB4) (Bacillus weihenstephanensis).